A 195-amino-acid polypeptide reads, in one-letter code: dCTP deaminase (195 aa).

DCTP is bound by residues 110-115 (RSSLAR), Asp-128, 136-138 (VLE), Tyr-171, Lys-178, and Gln-182. The Proton donor/acceptor role is filled by Glu-138.

The protein belongs to the dCTP deaminase family. In terms of assembly, homotrimer.

The catalysed reaction is dCTP + H2O + H(+) = dUTP + NH4(+). It functions in the pathway pyrimidine metabolism; dUMP biosynthesis; dUMP from dCTP (dUTP route): step 1/2. Its function is as follows. Catalyzes the deamination of dCTP to dUTP. The sequence is that of dCTP deaminase from Idiomarina loihiensis (strain ATCC BAA-735 / DSM 15497 / L2-TR).